A 62-amino-acid polypeptide reads, in one-letter code: Large ribosomal subunit protein uL29 (62 aa).

It belongs to the universal ribosomal protein uL29 family.

The protein is Large ribosomal subunit protein uL29 of Cytophaga hutchinsonii (strain ATCC 33406 / DSM 1761 / CIP 103989 / NBRC 15051 / NCIMB 9469 / D465).